A 645-amino-acid chain; its full sequence is Translation factor GUF1 homolog, mitochondrial (645 aa).

The tr-type G domain maps to 40–215 (EKIRNFGIVA…AIVERVPAPT (176 aa)). GTP is bound by residues 49 to 56 (AHVDHGKS), 108 to 112 (DTPGH), and 162 to 165 (NKID).

Belongs to the TRAFAC class translation factor GTPase superfamily. Classic translation factor GTPase family. LepA subfamily.

The protein resides in the mitochondrion inner membrane. It carries out the reaction GTP + H2O = GDP + phosphate + H(+). Its function is as follows. Promotes mitochondrial protein synthesis. May act as a fidelity factor of the translation reaction, by catalyzing a one-codon backward translocation of tRNAs on improperly translocated ribosomes. Binds to mitochondrial ribosomes in a GTP-dependent manner. This is Translation factor GUF1 homolog, mitochondrial from Caenorhabditis briggsae.